The following is a 42-amino-acid chain: Photosystem I reaction center subunit IX (42 aa).

A helical transmembrane segment spans residues 7-27 (YLSVAPVLSTLWFGSLAGLLI).

It belongs to the PsaJ family.

It localises to the plastid. The protein resides in the chloroplast thylakoid membrane. Functionally, may help in the organization of the PsaE and PsaF subunits. This chain is Photosystem I reaction center subunit IX, found in Lepidium virginicum (Virginia pepperweed).